We begin with the raw amino-acid sequence, 56 residues long: Small ribosomal subunit protein uS14 (56 aa).

Residues C21, C24, C39, and C42 each contribute to the Zn(2+) site.

This sequence belongs to the universal ribosomal protein uS14 family. Zinc-binding uS14 subfamily. As to quaternary structure, part of the 30S ribosomal subunit. It depends on Zn(2+) as a cofactor.

In terms of biological role, binds 16S rRNA, required for the assembly of 30S particles. This is Small ribosomal subunit protein uS14 from Pyrococcus abyssi (strain GE5 / Orsay).